A 391-amino-acid chain; its full sequence is ATP phosphoribosyltransferase regulatory subunit (391 aa).

The protein belongs to the class-II aminoacyl-tRNA synthetase family. HisZ subfamily. In terms of assembly, heteromultimer composed of HisG and HisZ subunits.

Its subcellular location is the cytoplasm. It participates in amino-acid biosynthesis; L-histidine biosynthesis; L-histidine from 5-phospho-alpha-D-ribose 1-diphosphate: step 1/9. Functionally, required for the first step of histidine biosynthesis. May allow the feedback regulation of ATP phosphoribosyltransferase activity by histidine. The chain is ATP phosphoribosyltransferase regulatory subunit from Prochlorococcus marinus (strain NATL2A).